We begin with the raw amino-acid sequence, 243 residues long: Ubiquinone/menaquinone biosynthesis C-methyltransferase UbiE (243 aa).

Residues Thr69, Asp90, and 116–117 contribute to the S-adenosyl-L-methionine site; that span reads DA.

This sequence belongs to the class I-like SAM-binding methyltransferase superfamily. MenG/UbiE family.

The catalysed reaction is a 2-demethylmenaquinol + S-adenosyl-L-methionine = a menaquinol + S-adenosyl-L-homocysteine + H(+). It carries out the reaction a 2-methoxy-6-(all-trans-polyprenyl)benzene-1,4-diol + S-adenosyl-L-methionine = a 5-methoxy-2-methyl-3-(all-trans-polyprenyl)benzene-1,4-diol + S-adenosyl-L-homocysteine + H(+). It participates in quinol/quinone metabolism; menaquinone biosynthesis; menaquinol from 1,4-dihydroxy-2-naphthoate: step 2/2. It functions in the pathway cofactor biosynthesis; ubiquinone biosynthesis. Its function is as follows. Methyltransferase required for the conversion of demethylmenaquinol (DMKH2) to menaquinol (MKH2) and the conversion of 2-polyprenyl-6-methoxy-1,4-benzoquinol (DDMQH2) to 2-polyprenyl-3-methyl-6-methoxy-1,4-benzoquinol (DMQH2). In Burkholderia vietnamiensis (strain G4 / LMG 22486) (Burkholderia cepacia (strain R1808)), this protein is Ubiquinone/menaquinone biosynthesis C-methyltransferase UbiE.